The following is a 347-amino-acid chain: Heat-inducible transcription repressor HrcA (347 aa).

The protein belongs to the HrcA family.

Its function is as follows. Negative regulator of class I heat shock genes (grpE-dnaK-dnaJ and groELS operons). Prevents heat-shock induction of these operons. The sequence is that of Heat-inducible transcription repressor HrcA from Rhodococcus jostii (strain RHA1).